A 488-amino-acid polypeptide reads, in one-letter code: Glutamyl-tRNA(Gln) amidotransferase subunit A (488 aa).

Catalysis depends on charge relay system residues Lys-77 and Ser-152. Ser-176 acts as the Acyl-ester intermediate in catalysis.

It belongs to the amidase family. GatA subfamily. As to quaternary structure, heterotrimer of A, B and C subunits.

It catalyses the reaction L-glutamyl-tRNA(Gln) + L-glutamine + ATP + H2O = L-glutaminyl-tRNA(Gln) + L-glutamate + ADP + phosphate + H(+). Its function is as follows. Allows the formation of correctly charged Gln-tRNA(Gln) through the transamidation of misacylated Glu-tRNA(Gln) in organisms which lack glutaminyl-tRNA synthetase. The reaction takes place in the presence of glutamine and ATP through an activated gamma-phospho-Glu-tRNA(Gln). The sequence is that of Glutamyl-tRNA(Gln) amidotransferase subunit A from Streptococcus suis (strain 05ZYH33).